A 371-amino-acid polypeptide reads, in one-letter code: Peptide chain release factor 2 (371 aa).

Gln251 is subject to N5-methylglutamine.

It belongs to the prokaryotic/mitochondrial release factor family. Post-translationally, methylated by PrmC. Methylation increases the termination efficiency of RF2.

The protein resides in the cytoplasm. Functionally, peptide chain release factor 2 directs the termination of translation in response to the peptide chain termination codons UGA and UAA. The polypeptide is Peptide chain release factor 2 (Pseudarthrobacter chlorophenolicus (strain ATCC 700700 / DSM 12829 / CIP 107037 / JCM 12360 / KCTC 9906 / NCIMB 13794 / A6) (Arthrobacter chlorophenolicus)).